Reading from the N-terminus, the 738-residue chain is Photosystem I P700 chlorophyll a apoprotein A2 (738 aa).

8 helical membrane-spanning segments follow: residues 46 to 69, 135 to 158, 175 to 199, 273 to 291, 333 to 356, 372 to 398, 420 to 442, and 521 to 539; these read LFST…FHIA, LYQG…LHLQ, LNHH…HVAI, IAHH…GHMY, LHFQ…QHMY, AALY…IFFI, AIIS…LYVH, and FLVH…LILV. [4Fe-4S] cluster contacts are provided by cysteine 563 and cysteine 572. A run of 2 helical transmembrane segments spans residues 579 to 600 and 647 to 669; these read AFYL…YWHW and LAVW…MFLI. Residues histidine 658, methionine 666, and tyrosine 674 each coordinate chlorophyll a. Residue tryptophan 675 participates in phylloquinone binding. A helical membrane pass occupies residues 711–731; it reads VVGLAHFTIGYILTYAAFLIA.

The protein belongs to the PsaA/PsaB family. As to quaternary structure, the PsaA/B heterodimer binds the P700 chlorophyll special pair and subsequent electron acceptors. PSI consists of a core antenna complex that captures photons, and an electron transfer chain that converts photonic excitation into a charge separation. The cyanobacterial PSI reaction center is composed of one copy each of PsaA,B,C,D,E,F,I,J,K,L,M and X, and forms trimeric complexes. Requires PSI electron transfer chain: 5 chlorophyll a, 1 chlorophyll a', 2 phylloquinones and 3 4Fe-4S clusters. PSI core antenna: 90 chlorophyll a, 22 carotenoids, 3 phospholipids and 1 galactolipid. P700 is a chlorophyll a/chlorophyll a' dimer, A0 is one or more chlorophyll a, A1 is one or both phylloquinones and FX is a shared 4Fe-4S iron-sulfur center. as cofactor.

It is found in the cellular thylakoid membrane. The catalysed reaction is reduced [plastocyanin] + hnu + oxidized [2Fe-2S]-[ferredoxin] = oxidized [plastocyanin] + reduced [2Fe-2S]-[ferredoxin]. PsaA and PsaB bind P700, the primary electron donor of photosystem I (PSI), as well as the electron acceptors A0, A1 and FX. PSI is a plastocyanin/cytochrome c6-ferredoxin oxidoreductase, converting photonic excitation into a charge separation, which transfers an electron from the donor P700 chlorophyll pair to the spectroscopically characterized acceptors A0, A1, FX, FA and FB in turn. Oxidized P700 is reduced on the lumenal side of the thylakoid membrane by plastocyanin or cytochrome c6. This is Photosystem I P700 chlorophyll a apoprotein A2 from Synechococcus sp. (strain WH7803).